The following is a 209-amino-acid chain: ATP-dependent Clp protease proteolytic subunit (209 aa).

The Nucleophile role is filled by serine 103. Residue histidine 128 is part of the active site.

It belongs to the peptidase S14 family. Fourteen ClpP subunits assemble into 2 heptameric rings which stack back to back to give a disk-like structure with a central cavity, resembling the structure of eukaryotic proteasomes.

The protein localises to the cytoplasm. The catalysed reaction is Hydrolysis of proteins to small peptides in the presence of ATP and magnesium. alpha-casein is the usual test substrate. In the absence of ATP, only oligopeptides shorter than five residues are hydrolyzed (such as succinyl-Leu-Tyr-|-NHMec, and Leu-Tyr-Leu-|-Tyr-Trp, in which cleavage of the -Tyr-|-Leu- and -Tyr-|-Trp bonds also occurs).. In terms of biological role, cleaves peptides in various proteins in a process that requires ATP hydrolysis. Has a chymotrypsin-like activity. Plays a major role in the degradation of misfolded proteins. This Lawsonia intracellularis (strain PHE/MN1-00) protein is ATP-dependent Clp protease proteolytic subunit.